The primary structure comprises 173 residues: MSFASRNIGRKIAGVGVDIVYLPRFAHILEKYSPFDPCGRSTLNKITRKFMHEKERFHFSNLLIEENCLTPRLHEYIAGVWALKECSLKALCCCVSKHDLPPAQVLYAGMLYKTQTDTGVPQLEFDKMFGKKYPKYQQLSKNYDSLFSTHEFLVSLSHDKDYLIAVTNLVERE.

It belongs to the P-Pant transferase superfamily. AcpS family.

Its subcellular location is the mitochondrion. The catalysed reaction is apo-[ACP] + CoA = holo-[ACP] + adenosine 3',5'-bisphosphate + H(+). Functionally, transfers the 4'-phosphopantetheine moiety from coenzyme A to a Ser of mitochondrial acyl-carrier-protein. The sequence is that of Mitochondrial holo-[acyl-carrier-protein] synthase (PPT2) from Saccharomyces cerevisiae (strain ATCC 204508 / S288c) (Baker's yeast).